A 391-amino-acid polypeptide reads, in one-letter code: Phosphoglycerate kinase (391 aa).

Substrate-binding positions include 21–23, Arg36, 59–62, Arg113, and Arg146; these read DLN and HLGR. ATP is bound by residues Lys197, Glu319, and 345–348; that span reads GGDT.

The protein belongs to the phosphoglycerate kinase family. As to quaternary structure, monomer.

It localises to the cytoplasm. It catalyses the reaction (2R)-3-phosphoglycerate + ATP = (2R)-3-phospho-glyceroyl phosphate + ADP. It participates in carbohydrate degradation; glycolysis; pyruvate from D-glyceraldehyde 3-phosphate: step 2/5. In Pseudoalteromonas translucida (strain TAC 125), this protein is Phosphoglycerate kinase.